A 380-amino-acid polypeptide reads, in one-letter code: Probable protein phosphatase 2C 27 (380 aa).

Residues 84 to 344 (RSGSCAEQGA…DNLTVIVVCF (261 aa)) enclose the PPM-type phosphatase domain. Mn(2+) contacts are provided by D128, G129, D292, and D335.

It belongs to the PP2C family. It depends on Mg(2+) as a cofactor. Mn(2+) serves as cofactor. In terms of tissue distribution, expressed in roots, leaves, stems, flower, and trichomes.

The protein resides in the nucleus. It localises to the cytoplasm. It carries out the reaction O-phospho-L-seryl-[protein] + H2O = L-seryl-[protein] + phosphate. The catalysed reaction is O-phospho-L-threonyl-[protein] + H2O = L-threonyl-[protein] + phosphate. Its function is as follows. Confers salt tolerance by triggering the expression of stress-responsive genes. In Arabidopsis thaliana (Mouse-ear cress), this protein is Probable protein phosphatase 2C 27.